The chain runs to 198 residues: Probable chorismate pyruvate-lyase (198 aa).

The substrate site is built by R76, L114, and E172.

It belongs to the UbiC family.

It localises to the cytoplasm. It catalyses the reaction chorismate = 4-hydroxybenzoate + pyruvate. It participates in cofactor biosynthesis; ubiquinone biosynthesis. Removes the pyruvyl group from chorismate, with concomitant aromatization of the ring, to provide 4-hydroxybenzoate (4HB) for the ubiquinone pathway. The polypeptide is Probable chorismate pyruvate-lyase (Bordetella avium (strain 197N)).